An 82-amino-acid polypeptide reads, in one-letter code: Large ribosomal subunit protein bL31B (82 aa).

Belongs to the bacterial ribosomal protein bL31 family. Type B subfamily. As to quaternary structure, part of the 50S ribosomal subunit.

The protein is Large ribosomal subunit protein bL31B of Pectobacterium atrosepticum (strain SCRI 1043 / ATCC BAA-672) (Erwinia carotovora subsp. atroseptica).